A 143-amino-acid chain; its full sequence is Hemoglobin subunit alpha-1 (143 aa).

Position 2 is an N-acetylserine (serine 2). The 142-residue stretch at 2 to 143 (SLSSKDKATV…LALALAEKYR (142 aa)) folds into the Globin domain. An O2-binding site is contributed by histidine 60. Histidine 89 provides a ligand contact to heme b.

The protein belongs to the globin family. As to quaternary structure, hb 1 is a heterotetramer of two alpha-1 and two beta-1 chains. In terms of tissue distribution, red blood cells.

Involved in oxygen transport from gills to the various peripheral tissues. The sequence is that of Hemoglobin subunit alpha-1 (hba1) from Arctogadus glacialis (Arctic cod).